The sequence spans 736 residues: Transcription factor E2F8 (736 aa).

Residues 1–26 form a disordered region; it reads MEEGSKENCGFNGSPMGSRSPPKQLT. Polar residues predominate over residues 15 to 26; it reads PMGSRSPPKQLT. 2 DNA-binding regions span residues 98-167 and 240-326; these read RKEK…IWHG and RKEK…QWTC. Disordered stretches follow at residues 386 to 405, 435 to 456, 483 to 551, and 716 to 736; these read RRKINSAPSSPIKSGDGSSS, SACKAKSTVKQPGGSDKNQTPT, EQTL…AVDD, and PGGMGCSPPESARKLDVGTDD. The span at 393–405 shows a compositional bias: low complexity; the sequence is PSSPIKSGDGSSS. Basic and acidic residues-rich tracts occupy residues 509-539 and 726-736; these read GRHEGDGTSHSEDHSAQERHPKRLPESDRGC and SARKLDVGTDD.

This sequence belongs to the E2F/DP family. In terms of assembly, homodimer and heterodimer: mainly forms homodimers and, to a lesser extent, heterodimers with e2f7.

It localises to the nucleus. In terms of biological role, atypical E2F transcription factor that participates in various processes such as angiogenesis and polyploidization of specialized cells. Mainly acts as a transcription repressor that binds DNA independently of DP proteins and specifically recognizes the E2 recognition site 5'-TTTC[CG]CGC-3'. Directly represses transcription of classical E2F transcription factors such as e2f1. Acts as a regulator of S-phase by recognizing and binding the E2-related site 5'-TTCCCGCC-3' and mediating repression of G1/S-regulated genes. Acts as a promoter of sprouting angiogenesis, possibly by acting as a transcription activator. In Xenopus tropicalis (Western clawed frog), this protein is Transcription factor E2F8 (e2f8).